Consider the following 218-residue polypeptide: Probable GTP-binding protein EngB (218 aa).

The 172-residue stretch at asparagine 21 to proline 192 folds into the EngB-type G domain. GTP is bound by residues glycine 29–serine 36, glycine 56–serine 60, aspartate 75–glycine 78, threonine 142–aspartate 145, and phenylalanine 171–serine 173. Residues serine 36 and threonine 58 each contribute to the Mg(2+) site. Residues methionine 194–glutamate 218 are disordered.

This sequence belongs to the TRAFAC class TrmE-Era-EngA-EngB-Septin-like GTPase superfamily. EngB GTPase family. Requires Mg(2+) as cofactor.

Necessary for normal cell division and for the maintenance of normal septation. This is Probable GTP-binding protein EngB from Oleidesulfovibrio alaskensis (strain ATCC BAA-1058 / DSM 17464 / G20) (Desulfovibrio alaskensis).